A 420-amino-acid polypeptide reads, in one-letter code: LanC-like protein 3 homolog (420 aa).

Belongs to the LanC-like protein family.

The chain is LanC-like protein 3 homolog from Drosophila pseudoobscura pseudoobscura (Fruit fly).